The sequence spans 1065 residues: RNA2 polyprotein (1065 aa).

As to quaternary structure, interacts with the large capsid protein. Interacts with the movement protein (via C-terminus). Interacts with the small capsid protein. Homomultimer; assembles as pentons. In terms of assembly, interacts (via C-terminus) with the small capsid protein. Post-translationally, specific enzymatic cleavages by picornain 3C-like protease in vivo yield mature proteins.

It is found in the host endoplasmic reticulum. The protein localises to the host cell junction. It localises to the host plasmodesma. The protein resides in the virion. Its function is as follows. Acts as a suppressor of post-transcriptional gene silencing (PTGS), a mechanism of plant viral defense that limits the accumulation of viral RNAs. Binds ssRNA. In terms of biological role, transports the viral genome to neighboring plant cells directly through plasmosdesmata, without any budding. The movement protein allows efficient cell to cell propagation, by bypassing the host cell wall barrier. Acts by forming a tubular structure at the host plasmodesmata, enlarging it enough to allow free passage of virion capsids. Binds to GTP and to single-stranded RNA and single-stranded DNA in a non-sequence-specific manner. Also acts as a suppressor of post-transcriptional gene silencing (PTGS), a mechanism of plant viral defense that limits the accumulation of viral RNAs. Functionally, together with the small capsid protein, forms an icosahedral capsid (T=3) enclosing the viral positive strand RNA genome, with a diameter of approximately 300 Angstroms. The large capsid protein interacts with the viral RNA. Also acts as a suppressor of post-transcriptional gene silencing (PTGS), a mechanism of plant viral defense that limits the accumulation of viral RNAs. Binds ssRNA. Together with the large capsid protein, forms an icosahedral capsid (T=3) enclosing the viral positive strand RNA genome, with a diameter of approximately 300 Angstroms. The capsid is formed from 60 copies each of the large and the small capsid protein. The small capsid protein forms the turrets at the fivefold axes of the viral particle. This chain is RNA2 polyprotein, found in Broad bean wilt virus 2 (BBWV-2).